A 229-amino-acid polypeptide reads, in one-letter code: Potassium/proton antiporter CemA (229 aa).

The next 3 membrane-spanning stretches (helical) occupy residues 7-27 (FTPLLYLASIVFLPWWISLLF), 107-127 (ILHFSTNIICFIILSGYSIFG), and 189-209 (IISGLVSTFPVILDTIFKYWI).

The protein belongs to the CemA family.

The protein localises to the plastid. Its subcellular location is the chloroplast inner membrane. The enzyme catalyses K(+)(in) + H(+)(out) = K(+)(out) + H(+)(in). Contributes to K(+)/H(+) antiport activity by supporting proton efflux to control proton extrusion and homeostasis in chloroplasts in a light-dependent manner to modulate photosynthesis. Prevents excessive induction of non-photochemical quenching (NPQ) under continuous-light conditions. Indirectly promotes efficient inorganic carbon uptake into chloroplasts. The chain is Potassium/proton antiporter CemA from Guizotia abyssinica (Niger).